The chain runs to 127 residues: Small ribosomal subunit protein uS13 (127 aa).

The disordered stretch occupies residues 97–127 (PVRGQRTRTNARTRRGGRKTVAGKKKAAAKK). Residues 101–127 (QRTRTNARTRRGGRKTVAGKKKAAAKK) show a composition bias toward basic residues.

It belongs to the universal ribosomal protein uS13 family. As to quaternary structure, part of the 30S ribosomal subunit. Forms a loose heterodimer with protein S19. Forms two bridges to the 50S subunit in the 70S ribosome.

Located at the top of the head of the 30S subunit, it contacts several helices of the 16S rRNA. In the 70S ribosome it contacts the 23S rRNA (bridge B1a) and protein L5 of the 50S subunit (bridge B1b), connecting the 2 subunits; these bridges are implicated in subunit movement. Contacts the tRNAs in the A and P-sites. This is Small ribosomal subunit protein uS13 from Gloeobacter violaceus (strain ATCC 29082 / PCC 7421).